Consider the following 285-residue polypeptide: GTP-binding protein 8 (285 aa).

Residues 110-283 (RQPEVCFIGR…KCFIADITGS (174 aa)) enclose the EngB-type G domain. GTP contacts are provided by residues 118–125 (GRSNVGKS), 147–151 (GHTKK), 165–168 (DMPG), 227–230 (TKID), and 262–264 (ISA). 2 residues coordinate Mg(2+): Ser125 and Thr149.

The protein belongs to the TRAFAC class TrmE-Era-EngA-EngB-Septin-like GTPase superfamily. EngB GTPase family. Mg(2+) serves as cofactor.

This is GTP-binding protein 8 (Gtpbp8) from Rattus norvegicus (Rat).